A 382-amino-acid polypeptide reads, in one-letter code: Na(+)/H(+) antiporter NhaA 2 (382 aa).

Helical transmembrane passes span 7-27 (MVLSETFPGILLIFFTFLALL), 58-78 (LDLWINDGLIAIFFLCIGLEL), 94-114 (SLPIFGALGGMITPALIFIAI), 124-144 (GWAIPTATDIAFAVGILMLLG), 153-173 (LFLLSLAIFDDLGAIVIIALF), 178-198 (LSALAIIICLFCIFALLLLNY), 199-219 (YHITHLSLYVLVGVVLWIAML), 255-275 (NPWVVYFILPLFAFANAGIDI), 291-311 (IILGLFLGKQLGVFTFCFIAI), 327-347 (FYGICILTGIGFTMSLFIDGL), and 361-381 (LAILVASFLSAIVGFIYLKIV).

Belongs to the NhaA Na(+)/H(+) (TC 2.A.33) antiporter family.

It is found in the cell inner membrane. It catalyses the reaction Na(+)(in) + 2 H(+)(out) = Na(+)(out) + 2 H(+)(in). In terms of biological role, na(+)/H(+) antiporter that extrudes sodium in exchange for external protons. The sequence is that of Na(+)/H(+) antiporter NhaA 2 from Campylobacter jejuni (strain RM1221).